The following is a 635-amino-acid chain: Surface protein F (635 aa).

The N-terminal stretch at 1-37 (MAKYRGKPFQLYVKLSCSTMMATSIILTNILPYDAQA) is a signal peptide. Basic and acidic residues-rich tracts occupy residues 101–112 (NELDSKDNKSSH) and 193–202 (KSKDASKDTS). Disordered stretches follow at residues 101-122 (NELD…SDID) and 192-228 (HKSK…SGHV). Residues 597 to 601 (LPKAG) carry the LPXTG sorting signal motif. A Pentaglycyl murein peptidoglycan amidated alanine modification is found at Ala600. A propeptide spans 601–635 (GETIKEHWLPISVIVGAMGVLMIWLSRRNKLKNKA) (removed by sortase).

It localises to the secreted. The protein resides in the cell wall. This Staphylococcus aureus (strain NCTC 8325 / PS 47) protein is Surface protein F.